Consider the following 173-residue polypeptide: Telomerase RNA component interacting RNase (173 aa).

A compositionally biased stretch (basic and acidic residues) spans 1-12 (MAARGRRAEPPG). The tract at residues 1-119 (MAARGRRAEP…LSFVGKRRGG (119 aa)) is disordered. 2 stretches are compositionally biased toward low complexity: residues 14–23 (EAPGPAGSGR) and 43–52 (SGSSPVSSGV). The span at 64 to 79 (LFKRKMEEEQRQRQEE) shows a compositional bias: basic and acidic residues. Pro residues predominate over residues 80–90 (PPPGPQRPDPP). An N6-acetyllysine modification is found at Lys-143.

Part of the telomerase RNA 3' end complex which contains about 488 proteins.

Its function is as follows. Exoribonuclease that is part of the telomerase RNA 3' end processing complex and which has the ability to cleave all four unpaired RNA nucleotides from the 5' end or 3' end with higher efficiency for purine bases. The protein is Telomerase RNA component interacting RNase of Mus musculus (Mouse).